Consider the following 259-residue polypeptide: Glutamate racemase (259 aa).

Substrate is bound by residues 9–10 and 41–42; these read DS and YG. Catalysis depends on cysteine 73, which acts as the Proton donor/acceptor. Residue 74–75 participates in substrate binding; sequence NT. Catalysis depends on cysteine 183, which acts as the Proton donor/acceptor. Residue 184–185 coordinates substrate; the sequence is TH.

This sequence belongs to the aspartate/glutamate racemases family.

The catalysed reaction is L-glutamate = D-glutamate. The protein operates within cell wall biogenesis; peptidoglycan biosynthesis. In terms of biological role, provides the (R)-glutamate required for cell wall biosynthesis. This Shewanella frigidimarina (strain NCIMB 400) protein is Glutamate racemase.